A 301-amino-acid polypeptide reads, in one-letter code: Protein ARMCX6 (301 aa).

Positions 1–6 (MGRARE) are mitochondrion outer membrane (MOM)-targeting sequence. At 1–7 (MGRAREM) the chain is on the mitochondrial intermembrane side. The helical; Signal-anchor transmembrane segment at 8-25 (GWMAAGLMIGAGACYCMY) threads the bilayer. Residues 26–36 (KLTMGRSEGNE) form a mitochondrion outer membrane (MOM)-targeting sequence region. Residues 26–301 (KLTMGRSEGN…REMLVEAISP (276 aa)) are Cytoplasmic-facing. Residues 69 to 101 (WSEDGDWDEPGAPGGTEDRRSGGGKANRAHPIK) are disordered.

This sequence belongs to the eutherian X-chromosome-specific Armcx family. Highly expressed in the developing neural tissues, neural crest derivatives and hind limbs. Also widely expressed in the adult nervous tissue, especially in the forebrain, including the cerebral cortex, hippocampus and thalamus.

Its subcellular location is the mitochondrion. It is found in the mitochondrion outer membrane. In terms of biological role, may regulate the dynamics and distribution of mitochondria in neural cells. This chain is Protein ARMCX6 (Armcx6), found in Mus musculus (Mouse).